The following is a 242-amino-acid chain: D-proline reductase subunit gamma (242 aa).

Catalysis depends on U152, which acts as the Nucleophile. Residue U152 is a non-standard amino acid, selenocysteine.

Consists of 3 subunits of 23, 26 and 45 kDa (alpha, gamma and beta respectively). The molecular weight of the complex is approximately 870 kDa, suggesting a decameric structure, if all 3 subunits are present in equal stoichiometry. This subunit is carbonylated in vitro on an unidentified residue.

The protein localises to the cytoplasm. It catalyses the reaction [PrdC protein]-Se-L-selenocysteinyl-S-L-cysteine + 5-aminopentanoate = [PrdC protein]-L-selenocysteine/L-cysteine + D-proline. D-proline reductase catalyzes the reductive cleavage of a C-N bond in D-proline resulting in the formation of 5-aminovalerate. The alpha subunit has been shown to bind D-proline, presumably via the pyruvoyl group. In Acetoanaerobium sticklandii (strain ATCC 12662 / DSM 519 / JCM 1433 / CCUG 9281 / NCIMB 10654 / HF) (Clostridium sticklandii), this protein is D-proline reductase subunit gamma (prdB).